Consider the following 303-residue polypeptide: Ribonucleoside-diphosphate reductase small subunit (303 aa).

Fe cation is bound by residues Asp60, Glu90, and His93. Tyr97 is an active-site residue. Residues 147-167 traverse the membrane as a helical segment; sequence LLMILIEGIFFASSFASISYL. The Fe cation site is built by Glu153, Glu187, and His190.

This sequence belongs to the ribonucleoside diphosphate reductase small chain family. As to quaternary structure, heterotetramer composed of a homodimer of the large subunit (R1) and a homodimer of the small subunit (R2). Larger multisubunit protein complex are also active, composed of (R1)n(R2)n. Fe cation is required as a cofactor.

The protein localises to the host membrane. It carries out the reaction a 2'-deoxyribonucleoside 5'-diphosphate + [thioredoxin]-disulfide + H2O = a ribonucleoside 5'-diphosphate + [thioredoxin]-dithiol. Functionally, ribonucleoside-diphosphate reductase holoenzyme provides the precursors necessary for viral DNA synthesis. Allows virus growth in non-dividing cells, as well as reactivation from latency in infected hosts. Catalyzes the biosynthesis of deoxyribonucleotides from the corresponding ribonucleotides. The protein is Ribonucleoside-diphosphate reductase small subunit of Suid herpesvirus 1 (strain Kaplan) (SuHV-1).